We begin with the raw amino-acid sequence, 208 residues long: MATVLFVKANNRPAEQAVSVKLYEAFLANYKEANPNDTVVELDLYKEELPYVGVDMINGTFKVGKGFDLTEEEAKAVAVADKYLNQFLEADKVVFGFPLWNLTIPAVLHTYIDYLNRAGKTFKYTPEGPVGLIGDKKIALLNARGGVYSEGPAAEVEMAVKYVASMMGFFGATNMETVVIEGHNQFPDKAEEIIAAGLEEAAKVASKF.

This sequence belongs to the azoreductase type 1 family. In terms of assembly, homodimer. The cofactor is FMN.

It catalyses the reaction 2 a quinone + NADH + H(+) = 2 a 1,4-benzosemiquinone + NAD(+). The catalysed reaction is N,N-dimethyl-1,4-phenylenediamine + anthranilate + 2 NAD(+) = 2-(4-dimethylaminophenyl)diazenylbenzoate + 2 NADH + 2 H(+). Quinone reductase that provides resistance to thiol-specific stress caused by electrophilic quinones. Its function is as follows. Also exhibits azoreductase activity. Catalyzes the reductive cleavage of the azo bond in aromatic azo compounds to the corresponding amines. The polypeptide is FMN-dependent NADH:quinone oxidoreductase 3 (Bacillus cereus (strain ATCC 14579 / DSM 31 / CCUG 7414 / JCM 2152 / NBRC 15305 / NCIMB 9373 / NCTC 2599 / NRRL B-3711)).